Consider the following 333-residue polypeptide: BRISC and BRCA1-A complex member 1 (333 aa).

Residue M1 is modified to N-acetylmethionine. A disordered region spans residues 1-85; it reads MEVAEANSPT…PWQVPASASE (85 aa). S8 bears the Phosphoserine mark. The segment covering 10-24 has biased composition (acidic residues); the sequence is TEEEEEEEEEGEETI. S33 and S53 each carry phosphoserine. The segment covering 58–67 has biased composition (low complexity); it reads EAATADGGAA. The interval 99–302 is VWFA-like; the sequence is VIICLDLSEE…LELHNCMAKL (204 aa).

It belongs to the BABAM1 family. As to quaternary structure, component of the ARISC complex, at least composed of UIMC1/RAP80, ABRAXAS1, BRCC3/BRCC36, BABAM2 and BABAM1/NBA1. Component of the BRCA1-A complex, at least composed of BRCA1, BARD1, UIMC1/RAP80, ABRAXAS1, BRCC3/BRCC36, BABAM2 and BABAM1/NBA1. In the BRCA1-A complex, interacts directly with ABRAXAS1 and BABAM2. Component of the BRISC complex, at least composed of ABRAXAS2, BRCC3/BRCC36, BABAM2 and BABAM1/NBA1. Identified in a complex with SHMT2 and the other subunits of the BRISC complex.

Its subcellular location is the cytoplasm. The protein resides in the nucleus. Component of the BRCA1-A complex, a complex that specifically recognizes 'Lys-63'-linked ubiquitinated histones H2A and H2AX at DNA lesions sites, leading to target the BRCA1-BARD1 heterodimer to sites of DNA damage at double-strand breaks (DSBs). The BRCA1-A complex also possesses deubiquitinase activity that specifically removes 'Lys-63'-linked ubiquitin on histones H2A and H2AX. In the BRCA1-A complex, it is required for the complex integrity and its localization at DSBs. Component of the BRISC complex, a multiprotein complex that specifically cleaves 'Lys-63'-linked ubiquitin in various substrates. In these 2 complexes, it is probably required to maintain the stability of BABAM2 and help the 'Lys-63'-linked deubiquitinase activity mediated by BRCC3/BRCC36 component. The BRISC complex is required for normal mitotic spindle assembly and microtubule attachment to kinetochores via its role in deubiquitinating NUMA1. Plays a role in interferon signaling via its role in the deubiquitination of the interferon receptor IFNAR1; deubiquitination increases IFNAR1 activity by enhancing its stability and cell surface expression. Down-regulates the response to bacterial lipopolysaccharide (LPS) via its role in IFNAR1 deubiquitination. The sequence is that of BRISC and BRCA1-A complex member 1 (Babam1) from Mus musculus (Mouse).